The following is a 618-amino-acid chain: DNA mismatch repair protein MutL (618 aa).

Belongs to the DNA mismatch repair MutL/HexB family.

Its function is as follows. This protein is involved in the repair of mismatches in DNA. It is required for dam-dependent methyl-directed DNA mismatch repair. May act as a 'molecular matchmaker', a protein that promotes the formation of a stable complex between two or more DNA-binding proteins in an ATP-dependent manner without itself being part of a final effector complex. The chain is DNA mismatch repair protein MutL from Porphyromonas gingivalis (strain ATCC BAA-308 / W83).